Reading from the N-terminus, the 734-residue chain is MALRFPRFSQGLAQDPTTRRIWFGIATAHDFESHDDITEERLYQNIFASHFGQLAIIFLWTSGNLFHVAWQGNFEAWVQDPLHVRPIAHAIWDPHFGQPAVEAFTRGGALGPVNIAYSGVYQWWYTIGLRTNGDLYTGALFLLFLSAISLIAGWLHLQPKWKPSVSWFKNAESRLNHHLSGLFGVSSLAWTGHLVHVAIPASRGESVRWNNFLDVLPHPQGLGPLFTGQWNLYAQNPDSNNHLFGTSEGAGTAILTLLGGFHPQTQSLWLTDMAHHHLAIAFIFLVAGHMYRTNFGIGHSIKDLLEAHIPPGGRLGRGHKGLYDTINNSLHFQLGLALASLGVITSLVAQHMYALPAYAFIAQDFTTQAALYTHHQYIAGFIMTGAFAHGAIFFIRDYNPEQNEDNVLARMLDHKEAIISHLSWASLFLGFHTLGLYVHNDVMLAFGTPEKQILIEPIFAQWIQSAHGKTSYGFDVLLSSTSGPAFNAGRSIWLPGWLNAVNENSNSLFLTIGPGDFLVHHAIALGLHTTTLILVKGALDARGSKLMPDKKDFGYSFPCDGPGRGGTCDISAWDAFYLAVFWMLNTIGWVTFYWHWKHITLWQGNVSQFNESSTYLMGWLRDYLWLNSSQLINGYNPFGMNSLSVWAWMFLFGHLVWATGFMFLISWRGYWQELIETLAWAHERTPLANLIRWRDKPVALSIVQARLVGLAHFSVGYIFTYAAFLIASTSGKFG.

8 consecutive transmembrane segments (helical) span residues 46–69, 135–158, 175–199, 273–291, 330–353, 369–395, 417–439, and 517–535; these read IFAS…FHVA, LYTG…LHLQ, LNHH…HVAI, MAHH…GHMY, LHFQ…QHMY, AALY…IFFI, AIIS…LYVH, and FLVH…LILV. 2 residues coordinate [4Fe-4S] cluster: cysteine 559 and cysteine 568. A run of 2 helical transmembrane segments spans residues 575–596 and 643–665; these read AFYL…YWHW and LSVW…MFLI. Histidine 654, methionine 662, and tyrosine 670 together coordinate chlorophyll a. A phylloquinone-binding site is contributed by tryptophan 671. Residues 707-727 traverse the membrane as a helical segment; sequence LVGLAHFSVGYIFTYAAFLIA.

The protein belongs to the PsaA/PsaB family. The PsaA/B heterodimer binds the P700 chlorophyll special pair and subsequent electron acceptors. PSI consists of a core antenna complex that captures photons, and an electron transfer chain that converts photonic excitation into a charge separation. The eukaryotic PSI reaction center is composed of at least 11 subunits. It depends on P700 is a chlorophyll a/chlorophyll a' dimer, A0 is one or more chlorophyll a, A1 is one or both phylloquinones and FX is a shared 4Fe-4S iron-sulfur center. as a cofactor.

The protein localises to the plastid. It localises to the chloroplast thylakoid membrane. It catalyses the reaction reduced [plastocyanin] + hnu + oxidized [2Fe-2S]-[ferredoxin] = oxidized [plastocyanin] + reduced [2Fe-2S]-[ferredoxin]. PsaA and PsaB bind P700, the primary electron donor of photosystem I (PSI), as well as the electron acceptors A0, A1 and FX. PSI is a plastocyanin-ferredoxin oxidoreductase, converting photonic excitation into a charge separation, which transfers an electron from the donor P700 chlorophyll pair to the spectroscopically characterized acceptors A0, A1, FX, FA and FB in turn. Oxidized P700 is reduced on the lumenal side of the thylakoid membrane by plastocyanin. The chain is Photosystem I P700 chlorophyll a apoprotein A2 from Cucumis sativus (Cucumber).